Here is a 641-residue protein sequence, read N- to C-terminus: Epithelial sodium channel subunit beta (641 aa).

The Cytoplasmic segment spans residues 1-50; that stretch reads MHVKKYLLKGLHRLQKGPGYTYKELLVWYCDNTNTHGPKRIICEGPKKKA. The helical transmembrane segment at 51 to 71 threads the bilayer; that stretch reads MWFVLTLLFTSLVCWQWGLFI. Topologically, residues 72-533 are extracellular; sequence KTYLNWEVSV…GGQFGFWMGG (462 aa). 9 disulfide bridges follow: Cys-98–Cys-273, Cys-185–Cys-190, Cys-197–Cys-204, Cys-250–Cys-257, Cys-362–Cys-449, Cys-387–Cys-445, Cys-391–Cys-441, Cys-400–Cys-427, and Cys-402–Cys-416. N-linked (GlcNAc...) asparagine glycosylation is present at Asn-141. N-linked (GlcNAc...) asparagine glycosylation occurs at Asn-379. A helical transmembrane segment spans residues 534–554; the sequence is SVLCLIEFGEIIIDFVWITII. Topologically, residues 555–641 are cytoplasmic; the sequence is KLVALAKSVR…IESDSEGDAI (87 aa). The disordered stretch occupies residues 597 to 624; the sequence is TPGPDVEAYPHEQNPPIPGTPPPNYDSL. The segment covering 609-620 has biased composition (pro residues); sequence QNPPIPGTPPPN. The PY motif; recruits WW domain-containing proteins and is thereby required for ubiquitination and inhibition of the channel by NEDD4 and NEDD4L signature appears at 617-621; the sequence is PPPNY. Residues Ser-634 and Ser-636 each carry the phosphoserine modification.

This sequence belongs to the amiloride-sensitive sodium channel (TC 1.A.6) family. SCNN1B subfamily. As to quaternary structure, component of the heterotrimeric epithelial sodium channel (ENaC) composed of an alpha/SCNN1A, a beta/SCNN1B and a gamma/SCNN1G subunit. An additional delta/SCNN1D subunit can replace the alpha/SCNN1A subunit to form an alternative channel with specific properties. Interacts with WWP1 (via WW domains). Interacts with WWP2 (via WW domains); inhibits the channel. Interacts with the full-length immature form of PCSK9 (pro-PCSK9). Interacts (N-glycosylated) with BPIFA1; the interaction is direct and inhibits the proteolytic processing of SCNN1A and SCNN1G and the activation of ENaC. In terms of processing, ubiquitinated. Can be ubiquitinated at multiple sites and undergo monoubiquitination and polyubiquitination. Ubiquitination by NEDD4 or NEDD4L inhibits the ENaC channel through endocytosis, intracellular retention and degradation of its individual subunits. However, some studies could not confirm the ubiquitination of this subunit of the ENaC. Phosphorylated on serine and threonine residues. Aldosterone and insulin increase the basal level of phosphorylation. Post-translationally, N-glycosylated. N-glycosylation is required for interaction with BPIFA1.

It localises to the apical cell membrane. The protein localises to the cytoplasmic vesicle membrane. It carries out the reaction Na(+)(in) = Na(+)(out). With respect to regulation, originally identified and characterized by its inhibition by the diuretic drug amiloride. Functionally, this is one of the three pore-forming subunits of the heterotrimeric epithelial sodium channel (ENaC), a critical regulator of sodium balance and fluid homeostasis. ENaC operates in epithelial tissues, where it mediates the electrodiffusion of sodium ions from extracellular fluid through the apical membrane of cells, with water following osmotically. It plays a key role in maintaining sodium homeostasis through electrogenic sodium reabsorption in the kidneys. Additionally, ENaC is essential for airway surface liquid homeostasis, which is crucial for proper mucus clearance. This Bos taurus (Bovine) protein is Epithelial sodium channel subunit beta.